The sequence spans 134 residues: Large ribosomal subunit protein bL17 (134 aa).

Belongs to the bacterial ribosomal protein bL17 family. In terms of assembly, part of the 50S ribosomal subunit. Contacts protein L32.

This chain is Large ribosomal subunit protein bL17, found in Aromatoleum aromaticum (strain DSM 19018 / LMG 30748 / EbN1) (Azoarcus sp. (strain EbN1)).